A 157-amino-acid chain; its full sequence is Probable succinate transporter subunit YjjB (157 aa).

Helical transmembrane passes span 8 to 28, 50 to 70, 87 to 107, and 129 to 149; these read LALA…AMVF, MILM…SMLV, VFTV…TAMI, and FLTA…PGLW.

Belongs to the ThrE exporter (TC 2.A.79) family. In terms of assembly, the transporter is composed of YjjB and YjjP.

It localises to the cell inner membrane. Its function is as follows. Involved in succinate export with YjjP. Both proteins are required for export. The protein is Probable succinate transporter subunit YjjB of Escherichia coli O1:K1 / APEC.